Consider the following 303-residue polypeptide: E3 ubiquitin-protein ligase CHIP (303 aa).

A compositionally biased stretch (basic and acidic residues) spans 1 to 10; sequence MKGKEEKEGG. Positions 1 to 30 are disordered; that stretch reads MKGKEEKEGGARLGAGGGSPEKSPSAQELK. A Glycyl lysine isopeptide (Lys-Gly) (interchain with G-Cter in ubiquitin) cross-link involves residue K2. Phosphoserine is present on S19. K22 participates in a covalent cross-link: Glycyl lysine isopeptide (Lys-Gly) (interchain with G-Cter in ubiquitin). A phosphoserine mark is found at S23 and S25. TPR repeat units lie at residues 26 to 59, 60 to 93, and 95 to 127; these read AQEL…NPLV, AVYY…DGQS, and KAHF…AKEQ. A required for interaction with MAPK7 region spans residues 101–200; sequence GQCQLEMESY…SHVRAQQACI (100 aa). The required for interaction with and ubiquitination of MYOCD stretch occupies residues 142–196; sequence AKKKRWNSIEERRIHQESELHSYLSRLIAAERERELEECQRNHEGDEDDSHVRAQ. The tract at residues 143-197 is required for interaction with FOXO1; sequence KKKRWNSIEERRIHQESELHSYLSRLIAAERERELEECQRNHEGDEDDSHVRAQQ. The interval 143-303 is required for ubiquitination of FOXO1; sequence KKKRWNSIEE…ISENGWVEDY (161 aa). A Phosphoserine modification is found at S149. Glycyl lysine isopeptide (Lys-Gly) (interchain with G-Cter in ubiquitin) cross-links involve residues K221 and K255. The region spanning 226-300 is the U-box domain; sequence DIPDYLCGKI…DAFISENGWV (75 aa). S273 is subject to Phosphoserine.

As to quaternary structure, homodimer. Interacts with BAG2. Interacts with E2 ubiquitin conjugating enzymes UBE2D1, UBE2D2 and UBE2D3. Detected in a ternary complex containing STUB1, HSPA1A and HSPBP1. Part of a complex composed of STUB1/CHIP, VCP/p97, CHRNA3, and UBXN2A that modulates the ubiquitination and endoplasmic reticulum-associated degradation (ERAD) of CHRNA3. Within the complex UBXN2A acts as a scaffold protein required for the interaction of CHRNA3 with VCP/p97, this interaction also inhibits CHRNA3 ubiquitination by STUB1/CHIP and subsequently ERAD. Interacts with MKKS. Interacts with DNAAF4. Interacts (when monoubiquitinated) with ATXN3. Interacts with UBE2W. Interacts (via the U-box domain) with the UBE2V2-UBE2N heterodimer; the complex has a specific 'Lys-63'-linked polyubiquitination activity. Interacts with DNAJB6. Interacts with FLCN. Interacts with HSP90AA1. Interacts with HSP90. Interacts with UBE2N and UBE2V1. Interacts (via TPR repeats) with HSPA8 (via C-terminus). Interacts (via TPR repeats) with HSPA1A (via C-terminus). Interacts with the non-acetylated form of HSPA1A and HSPA1B. Interacts with SMAD3 and HSP90AB1. Interacts with UBE4B. Interacts with PRMT5. Interacts with MYOCD (via C-terminus). Interacts with FOXO1 (when phosphorylated on 'Ser-256'). Interacts with MAPK7/ERK5; the interaction is enhanced in the presence of IGF1 or MAP2K5 and promotes STUB1/CHIP E3 ligase activity. Interacts with and ubiquitinates ESR1; the interaction is promoted in the absence of estradiol (17-beta-estradiol/E2). Interacts with ESR2. Interacts with and ubiquitinates NFATC3; HSPA1A/HSP70 is required as a co-chaperone. In macrophages, interacts with PAQR3; the interaction promotes PPARG poylubiquitination and STUB1-mediated degradation. Component of the chaperone-assisted selective autophagy (CASA) complex consisting of BAG3, HSPA8/HSC70, HSPB8 and STUB1/CHIP. Post-translationally, monoubiquitinated at Lys-2 following cell stress by UBE2W, promoting the interaction with ATXN3. Auto-ubiquitinated; mediated by UBE2D1 and UBE2D2 and enhanced in the presence of MAP2K5. Expressed in differentiated myotubes (at protein level). Highly expressed in skeletal muscle, heart, pancreas, brain and placenta. Detected in kidney, liver and lung.

Its subcellular location is the cytoplasm. The protein localises to the nucleus. It is found in the mitochondrion. It catalyses the reaction S-ubiquitinyl-[E2 ubiquitin-conjugating enzyme]-L-cysteine + [acceptor protein]-L-lysine = [E2 ubiquitin-conjugating enzyme]-L-cysteine + N(6)-ubiquitinyl-[acceptor protein]-L-lysine.. It functions in the pathway protein modification; protein ubiquitination. Its function is as follows. E3 ubiquitin-protein ligase which targets misfolded chaperone substrates towards proteasomal degradation. Plays a role in the maintenance of mitochondrial morphology and promotes mitophagic removal of dysfunctional mitochondria; thereby acts as a protector against apoptosis in response to cellular stress. Negatively regulates vascular smooth muscle contraction, via degradation of the transcriptional activator MYOCD and subsequent loss of transcription of genes involved in vascular smooth muscle contraction. Promotes survival and proliferation of cardiac smooth muscle cells via ubiquitination and degradation of FOXO1, resulting in subsequent repression of FOXO1-mediated transcription of pro-apoptotic genes. Ubiquitinates ICER-type isoforms of CREM and targets them for proteasomal degradation, thereby acts as a positive effector of MAPK/ERK-mediated inhibition of apoptosis in cardiomyocytes. Inhibits lipopolysaccharide-induced apoptosis and hypertrophy in cardiomyocytes, via ubiquitination and subsequent proteasomal degradation of NFATC3. Collaborates with ATXN3 in the degradation of misfolded chaperone substrates: ATXN3 restricting the length of ubiquitin chain attached to STUB1/CHIP substrates and preventing further chain extension. Ubiquitinates NOS1 in concert with Hsp70 and Hsp40. Modulates the activity of several chaperone complexes, including Hsp70, Hsc70 and Hsp90. Ubiquitinates CHRNA3 targeting it for endoplasmic reticulum-associated degradation in cortical neurons, as part of the STUB1-VCP-UBXN2A complex. Ubiquitinates and promotes ESR1 proteasomal degradation in response to age-related circulating estradiol (17-beta-estradiol/E2) decline, thereby promotes neuronal apoptosis in response to ischemic reperfusion injury. Mediates transfer of non-canonical short ubiquitin chains to HSPA8 that have no effect on HSPA8 degradation. Mediates polyubiquitination of DNA polymerase beta (POLB) at 'Lys-41', 'Lys-61' and 'Lys-81', thereby playing a role in base-excision repair: catalyzes polyubiquitination by amplifying the HUWE1/ARF-BP1-dependent monoubiquitination and leading to POLB-degradation by the proteasome. Mediates polyubiquitination of CYP3A4. Ubiquitinates EPHA2 and may regulate the receptor stability and activity through proteasomal degradation. Acts as a co-chaperone for HSPA1A and HSPA1B chaperone proteins and promotes ubiquitin-mediated protein degradation. Negatively regulates the suppressive function of regulatory T-cells (Treg) during inflammation by mediating the ubiquitination and degradation of FOXP3 in a HSPA1A/B-dependent manner. Catalyzes monoubiquitination of SIRT6, preventing its degradation by the proteasome. Likely mediates polyubiquitination and down-regulates plasma membrane expression of PD-L1/CD274, an immune inhibitory ligand critical for immune tolerance to self and antitumor immunity. Negatively regulates TGF-beta signaling by modulating the basal level of SMAD3 via ubiquitin-mediated degradation. Plays a role in the degradation of TP53. Mediates ubiquitination of RIPK3 leading to its subsequent proteasome-dependent degradation. May regulate myosin assembly in striated muscles together with UBE4B and VCP/p97 by targeting myosin chaperone UNC45B for proteasomal degradation. Ubiquitinates PPARG in macrophages playing a role in M2 macrophages polarization and angiogenesis. This chain is E3 ubiquitin-protein ligase CHIP, found in Homo sapiens (Human).